Consider the following 464-residue polypeptide: Cysteine--tRNA ligase (464 aa).

Cysteine 28 contacts Zn(2+). The 'HIGH' region motif lies at 30-40; it reads ITAYDFCHIGH. Zn(2+) contacts are provided by cysteine 210, histidine 235, and glutamate 239. Residues 267–271 carry the 'KMSKS' region motif; sequence KMSKS. Position 270 (lysine 270) interacts with ATP.

Belongs to the class-I aminoacyl-tRNA synthetase family. As to quaternary structure, monomer. It depends on Zn(2+) as a cofactor.

The protein resides in the cytoplasm. The catalysed reaction is tRNA(Cys) + L-cysteine + ATP = L-cysteinyl-tRNA(Cys) + AMP + diphosphate. The sequence is that of Cysteine--tRNA ligase from Buchnera aphidicola subsp. Baizongia pistaciae (strain Bp).